We begin with the raw amino-acid sequence, 285 residues long: Sulfotransferase 2A2 (285 aa).

Lysine 44, serine 45, glycine 46, threonine 47, asparagine 48, and tryptophan 49 together coordinate 3'-phosphoadenylyl sulfate. Residue histidine 99 is the Proton acceptor of the active site. 7 residues coordinate 3'-phosphoadenylyl sulfate: arginine 121, serine 129, tyrosine 184, serine 218, arginine 247, lysine 248, and glycine 249.

The protein belongs to the sulfotransferase 1 family. Detected in liver.

It is found in the cytoplasm. It catalyses the reaction an alcohol + 3'-phosphoadenylyl sulfate = an alkyl sulfate + adenosine 3',5'-bisphosphate + H(+). Its function is as follows. Sulfotransferase that utilizes 3'-phospho-5'-adenylyl sulfate (PAPS) as sulfonate donor to catalyze the sulfate conjugation of a potential wide variety of acceptor molecules bearing a hydroxyl group. Sulfonation increases the water solubility of most compounds, and therefore their renal excretion, but it can also result in bioactivation to form active metabolites. The sequence is that of Sulfotransferase 2A2 from Rattus norvegicus (Rat).